We begin with the raw amino-acid sequence, 89 residues long: Small ribosomal subunit protein uS14 (89 aa).

This sequence belongs to the universal ribosomal protein uS14 family. In terms of assembly, part of the 30S ribosomal subunit. Contacts proteins S3 and S10.

Functionally, binds 16S rRNA, required for the assembly of 30S particles and may also be responsible for determining the conformation of the 16S rRNA at the A site. The protein is Small ribosomal subunit protein uS14 of Pelodictyon phaeoclathratiforme (strain DSM 5477 / BU-1).